Consider the following 112-residue polypeptide: Large ribosomal subunit protein mL53 (112 aa).

It belongs to the mitochondrion-specific ribosomal protein mL53 family. Component of the mitochondrial large ribosomal subunit (mt-LSU). Mature mammalian 55S mitochondrial ribosomes consist of a small (28S) and a large (39S) subunit. The 28S small subunit contains a 12S ribosomal RNA (12S mt-rRNA) and 30 different proteins. The 39S large subunit contains a 16S rRNA (16S mt-rRNA), a copy of mitochondrial valine transfer RNA (mt-tRNA(Val)), which plays an integral structural role, and 52 different proteins. mL53 is located at the L7/L12 stalk.

The protein resides in the mitochondrion. This Homo sapiens (Human) protein is Large ribosomal subunit protein mL53 (MRPL53).